A 1180-amino-acid polypeptide reads, in one-letter code: uncharacterized protein (1180 aa).

Disordered stretches follow at residues arginine 229–isoleucine 280, lysine 431–lysine 465, serine 484–arginine 575, glycine 730–threonine 758, glycine 810–aspartate 986, arginine 1045–methionine 1109, and glutamate 1125–glutamate 1152. Over residues glutamine 269–serine 279 the composition is skewed to acidic residues. The segment covering lysine 431–alanine 443 has biased composition (basic residues). Residues aspartate 486 to proline 497 show a composition bias toward polar residues. Over residues serine 509–serine 518 the composition is skewed to basic residues. 3 stretches are compositionally biased toward basic and acidic residues: residues glycine 730–proline 745, serine 826–arginine 837, and threonine 846–lysine 856. A compositionally biased stretch (basic residues) spans lysine 872–glutamine 889. Over residues glutamine 937–methionine 959 the composition is skewed to polar residues. 3 stretches are compositionally biased toward basic and acidic residues: residues glutamate 960–aspartate 986, arginine 1045–glutamate 1106, and leucine 1127–glutamate 1152. Positions leucine 988–arginine 1171 form a coiled coil.

This is an uncharacterized protein from Homo sapiens (Human).